Consider the following 161-residue polypeptide: Phosphohistidine phosphatase SixA (161 aa).

Belongs to the SixA phosphatase family.

In terms of biological role, exhibits phosphohistidine phosphatase activity towards the HPt domain of the ArcB sensor involved in the multistep His-Asp phosphorelay. The protein is Phosphohistidine phosphatase SixA (sixA) of Escherichia coli (strain K12).